The primary structure comprises 251 residues: uncharacterized protein (251 aa).

Positions 1–18 (MRILIILSIILCSLFARA) are cleaved as a signal peptide.

The protein belongs to the MlaA family.

This is an uncharacterized protein from Rickettsia felis (strain ATCC VR-1525 / URRWXCal2) (Rickettsia azadi).